A 257-amino-acid chain; its full sequence is Protein UL133 (257 aa).

2 consecutive transmembrane segments (helical) span residues 14–34 (WGVP…IWCL) and 45–65 (PGIA…AYLI). The disordered stretch occupies residues 149–232 (PTVFVPPPSE…AMPQMPPGVA (84 aa)). The segment covering 164–175 (VIPPQPPTPTSE) has biased composition (pro residues). The span at 179 to 193 (KKGRAKDKPKGRPKN) shows a compositional bias: basic residues. The span at 214–228 (GGPPDASPPAMPQMP) shows a compositional bias: pro residues.

The protein localises to the host Golgi apparatus membrane. The protein is Protein UL133 (UL133) of Human cytomegalovirus (strain Merlin) (HHV-5).